Reading from the N-terminus, the 204-residue chain is Glycerol-3-phosphate acyltransferase (204 aa).

The next 5 helical transmembrane spans lie at 8–28 (ILIF…CYIF), 53–73 (VPAA…VVIA), 81–101 (FITA…IFFG), 116–136 (FGFS…VAII), and 155–175 (VIFT…IIIL).

It belongs to the PlsY family. As to quaternary structure, probably interacts with PlsX.

The protein resides in the cell inner membrane. It catalyses the reaction an acyl phosphate + sn-glycerol 3-phosphate = a 1-acyl-sn-glycero-3-phosphate + phosphate. Its pathway is lipid metabolism; phospholipid metabolism. In terms of biological role, catalyzes the transfer of an acyl group from acyl-phosphate (acyl-PO(4)) to glycerol-3-phosphate (G3P) to form lysophosphatidic acid (LPA). This enzyme utilizes acyl-phosphate as fatty acyl donor, but not acyl-CoA or acyl-ACP. This is Glycerol-3-phosphate acyltransferase from Francisella tularensis subsp. holarctica (strain FTNF002-00 / FTA).